The following is a 201-amino-acid chain: uncharacterized protein (201 aa).

The chain crosses the membrane as a helical span at residues 11–31 (IWKSLYLLIIVGMLYIGYILI).

The protein localises to the membrane. This is an uncharacterized protein from Rickettsia prowazekii (strain Madrid E).